Reading from the N-terminus, the 343-residue chain is Methionine import ATP-binding protein MetN 3 (343 aa).

Positions 2–241 constitute an ABC transporter domain; that stretch reads IELSNITKVF…PKTPLAQKFI (240 aa). 38-45 is a binding site for ATP; that stretch reads GASGAGKS.

The protein belongs to the ABC transporter superfamily. Methionine importer (TC 3.A.1.24) family. The complex is composed of two ATP-binding proteins (MetN), two transmembrane proteins (MetI) and a solute-binding protein (MetQ).

The protein resides in the cell inner membrane. The catalysed reaction is L-methionine(out) + ATP + H2O = L-methionine(in) + ADP + phosphate + H(+). It catalyses the reaction D-methionine(out) + ATP + H2O = D-methionine(in) + ADP + phosphate + H(+). Part of the ABC transporter complex MetNIQ involved in methionine import. Responsible for energy coupling to the transport system. The chain is Methionine import ATP-binding protein MetN 3 from Pectobacterium atrosepticum (strain SCRI 1043 / ATCC BAA-672) (Erwinia carotovora subsp. atroseptica).